The following is a 356-amino-acid chain: MSKKVLFIDRDGTLINEPLDNFQIDRIEKLVLEPYVINALLILQQANFQLVMVSNQDGLGTSSFPQEDFDRPHNLMMQIFKSQNIFFDQVLICPHLAKDKCHCRKPGIALVAPWLVGNKIDRTKSYVIGDRETDIKLAYNMGINSLRYNRNTMNWQAICNYLTSLNRYAHVKRITKETSINVEVWLDREAPSKINTGINFFDHMLEQIATHSGLCMTIEVKGDLYIDDHHTIEDTAIALGTALKQGLGDKHGINRFGFLLPMDECLARCVIDLSGRPFLEYTAEYSYQKVGDMSTEMVEHFFRSLSYAMACTLYLKTEGKNDHHRVESLFKVFGRALRQAICVESNVLPSSKGVLS.

Residues 1-166 (MSKKVLFIDR…AICNYLTSLN (166 aa)) are histidinol-phosphatase. Asp9 functions as the Nucleophile in the catalytic mechanism. Mg(2+)-binding residues include Asp9 and Asp11. Asp11 (proton donor) is an active-site residue. Positions 93, 95, 101, and 103 each coordinate Zn(2+). Mg(2+) is bound at residue Asp130. The segment at 167–356 (RYAHVKRITK…VLPSSKGVLS (190 aa)) is imidazoleglycerol-phosphate dehydratase.

This sequence in the N-terminal section; belongs to the histidinol-phosphatase family. The protein in the C-terminal section; belongs to the imidazoleglycerol-phosphate dehydratase family. Mg(2+) serves as cofactor. The cofactor is Zn(2+).

It localises to the cytoplasm. It catalyses the reaction D-erythro-1-(imidazol-4-yl)glycerol 3-phosphate = 3-(imidazol-4-yl)-2-oxopropyl phosphate + H2O. The catalysed reaction is L-histidinol phosphate + H2O = L-histidinol + phosphate. It participates in amino-acid biosynthesis; L-histidine biosynthesis; L-histidine from 5-phospho-alpha-D-ribose 1-diphosphate: step 6/9. Its pathway is amino-acid biosynthesis; L-histidine biosynthesis; L-histidine from 5-phospho-alpha-D-ribose 1-diphosphate: step 8/9. This chain is Histidine biosynthesis bifunctional protein HisB, found in Baumannia cicadellinicola subsp. Homalodisca coagulata.